We begin with the raw amino-acid sequence, 2542 residues long: Unconventional myosin-IXa (2542 aa).

Residues 14 to 112 form the Ras-associating domain; sequence NEHTLRIYPG…YRFLLREKNL (99 aa). The region spanning 146 to 1017 is the Myosin motor domain; it reads KDFDDLCSLP…ERQHLQDLLH (872 aa). Residues 175–195 traverse the membrane as a helical segment; the sequence is IYTYVGSILIAINPFKFLPIY. 239 to 246 is a binding site for ATP; it reads GESGSGKT. The residue at position 755 (Ser-755) is a Phosphoserine. Residues 908-919 are actin-binding; sequence QAEPYFVKCIRS. IQ domains lie at 1021–1041, 1043–1072, 1075–1104, 1116–1145, and 1139–1168; these read LRRI…QQFL, LRQA…EKDA, MASA…AAVI, RHKA…KIIL, and QRNK…EKLR. The segment at 1022 to 1163 is neck or regulatory domain; sequence RRIVLLQRWF…RARQRCNALK (142 aa). The tract at residues 1164 to 2505 is tail; that stretch reads EEKLREAKLE…LKNVKNSPQK (1342 aa). Basic and acidic residues predominate over residues 1221 to 1240; that stretch reads RESSMDFSKESPDKQQERGR. Residues 1221 to 1276 are disordered; sequence RESSMDFSKESPDKQQERGRRQSGTDLQEDVIVRQRPKSLEDLHQKKVGRAKRESR. Ser-1243 carries the phosphoserine modification. The residue at position 1245 (Thr-1245) is a Phosphothreonine. Ser-1259 is modified (phosphoserine). The stretch at 1265 to 1292 forms a coiled coil; that stretch reads QKKVGRAKRESRRMRELEQAIFSLELLK. Basic residues predominate over residues 1266–1276; that stretch reads KKVGRAKRESR. Phosphoserine is present on residues Ser-1300 and Ser-1318. Residues 1342–1401 form a disordered region; that stretch reads KSKPESLILDEGELKISSPNTFTNPKSQDNALSASSETSSTLAGKGASSDSEHLKNGTAK. Over residues 1358–1371 the composition is skewed to polar residues; it reads SSPNTFTNPKSQDN. The segment covering 1372–1384 has biased composition (low complexity); it reads ALSASSETSSTLA. Positions 1391-1401 are enriched in basic and acidic residues; the sequence is DSEHLKNGTAK. Residues 1492-1539 are a coiled coil; the sequence is TVLKKLEKLNIEKEKRQKQLQQQNEKEMMEQIRQQTDILEKERKAFKT. 4 disordered regions span residues 1650 to 1675, 1693 to 1727, 1767 to 1793, and 1806 to 1841; these read RSTE…REGS, SGNP…SVDE, GKQG…PGPD, and QYHP…KRGV. The segment covering 1665–1675 has biased composition (basic and acidic residues); that stretch reads HRSDDPSREGS. Polar residues predominate over residues 1715-1726; that stretch reads QQETSQRFSSVD. Residues 1821 to 1833 are compositionally biased toward basic and acidic residues; sequence CRKEFKENKEPSP. Ser-1950 is modified (phosphoserine). 2 Phorbol-ester/DAG-type zinc fingers span residues 2001–2050 and 2068–2119; these read GHIF…TAKC and SRLT…DTDA. The Rho-GAP domain maps to 2065 to 2253; that stretch reads VELSRLTSED…LIVVEQMNKY (189 aa). Ser-2293 and Ser-2296 each carry phosphoserine. The stretch at 2324-2360 forms a coiled coil; sequence TDQQQAAMQQEEKVLTEQIENLQKEKEELTFEMLVLE. Positions 2361 to 2443 are disordered; sequence PRASDDETLE…NTTSSHGTRK (83 aa). A compositionally biased stretch (polar residues) spans 2377–2386; that stretch reads TADSSENLNM. Positions 2420–2438 are enriched in low complexity; that stretch reads SLDSVSSSVSSCLSNTTSS. A Phosphoserine modification is found at Ser-2458. Residues 2465 to 2530 form a disordered region; sequence TEGPLGQAKS…TVDSDCSSTQ (66 aa).

It belongs to the TRAFAC class myosin-kinesin ATPase superfamily. Myosin family. Post-translationally, phosphorylated by ALPK1 following monosodium urate monohydrate (MSU)-induced inflammation. As to expression, expressed in the eye, lung, liver, brain, heart, kidney, skeletal muscle and spleen. No detection was found in liver. In the brain, expressed in the ependymal cells of the third ventricle and the aqueduct.

The protein resides in the membrane. It is found in the cytoplasm. The protein localises to the synapse. It localises to the cell projection. Its subcellular location is the growth cone. Myosins are actin-based motor molecules with ATPase activity. Unconventional myosins serve in intracellular movements. Regulates Rho by stimulating it's GTPase activity in neurons. Required for the regulation of neurite branching and motor neuron axon guidance. The chain is Unconventional myosin-IXa (Myo9a) from Mus musculus (Mouse).